Reading from the N-terminus, the 281-residue chain is Probable endonuclease 4 (281 aa).

His69, His109, Glu145, Asp179, His182, His216, Asp229, His231, and Glu261 together coordinate Zn(2+).

The protein belongs to the AP endonuclease 2 family. The cofactor is Zn(2+).

The enzyme catalyses Endonucleolytic cleavage to 5'-phosphooligonucleotide end-products.. Endonuclease IV plays a role in DNA repair. It cleaves phosphodiester bonds at apurinic or apyrimidinic (AP) sites, generating a 3'-hydroxyl group and a 5'-terminal sugar phosphate. The protein is Probable endonuclease 4 of Nautilia profundicola (strain ATCC BAA-1463 / DSM 18972 / AmH).